Reading from the N-terminus, the 540-residue chain is MAIPKTMEAPFTHLFLNLTVMTLGQILVIPVALLVVYICIRIGSIRRQFRDLPKPPHHAFLGHFPILLRELRTLPRDIFAPLVVDLVRRKFDLPAVFFLDLYPLFNPIVFISDPGLARKITQEDRSLRYPGVFETLYPAIPTRWFRTVADRAWTKWHPVVGVSFTAAHFVRMVPQMAEDLRAMLDQLNDWSDRDEIFCMERVATDAILAMTGRAYFGMELDCFAPKSQWTSAFRAATTPVVAARNPLRKPFVLPSWKRHARTFHAVIREKVQHTFDKDENHEAGVPSLLASSFAVYRKNGFPEFPRVSQEALSTEYLEELTSTGAAFLIGATSGASVISYAFLLLHQHPNILDDLRREHGQVCGFNRQSILLALQSRPRLLNDLKLTHAVLKETLRLFPMGPVLRKCPSETMEYEGRTYDIRNHIVAISHNSLHRRPDLFPNPDAFNPYRFLPGAAIPIPADAWRPFEKGNGYCVGQELAMIQMKVMLLLTLTEFDFQPKYAREAARGPDIYGGYAYTTGSGIGPTPAGGLPMRVDKRMK.

N-linked (GlcNAc...) asparagine glycosylation is present at Asn17. 2 helical membrane-spanning segments follow: residues 20–40 and 325–345; these read VMTLGQILVIPVALLVVYICI and AAFLIGATSGASVISYAFLLL. Residue Cys474 participates in heme binding.

Belongs to the cytochrome P450 family. The cofactor is heme.

The protein resides in the membrane. Its pathway is secondary metabolite biosynthesis. Cytochrome P450 monooxygenase; part of the gene cluster that mediates the biosynthesis of the indole diterpenes penitrems. The geranylgeranyl diphosphate (GGPP) synthase ptmG catalyzes the first step in penitrem biosynthesis via conversion of farnesyl pyrophosphate and isopentyl pyrophosphate into geranylgeranyl pyrophosphate (GGPP). Condensation of indole-3-glycerol phosphate with GGPP by the prenyl transferase ptmC then forms 3-geranylgeranylindole (3-GGI). Epoxidation by the FAD-dependent monooxygenase ptmM leads to a epoxidized-GGI that is substrate of the terpene cyclase ptmB for cyclization to yield paspaline. Paspaline is subsequently converted to 13-desoxypaxilline by the cytochrome P450 monooxygenase ptmP, the latter being then converted to paxilline by the cytochrome P450 monooxygenase ptmQ. Paxilline is converted to beta-paxitriol via C-10 ketoreduction by the short-chain dehydrogenase ptmH which can be monoprenylated at the C-20 by the indole diterpene prenyltransferase ptmD. A two-step elimination (acetylation and elimination) process performed by the O-acetyltransferase ptmV and ptmI leads to the production of the prenylated form of penijanthine. The FAD-linked oxidoreductase ptmO then converts the prenylated form of penijanthine into PC-M5 which is in turn transformed into PC-M4 by the aromatic dimethylallyltransferase ptmE. Five sequential oxidative transformations performed by the cytochrome P450 monooxygenases ptmK, ptmU, ptmL, ptmN and ptmJ yield the various penitrem compounds. PtmK, ptmU and ptmM are involved in the formation of the key bicyclic ring of penitrem C via the formation of the intermediates secopenitrem D and penitrem D. PtmL catalyzes the epoxidation of penitrem D and C to yield penitrem B and F, respectively. PtmJ catalyzes the last benzylic hydroxylation to convert penitrem B to prenitrem E and penitrem F to penitrem A. The polypeptide is Cytochrome P450 monooxygenase ptmG (Penicillium ochrochloron).